We begin with the raw amino-acid sequence, 510 residues long: Nectin-4 (510 aa).

The N-terminal stretch at 1 to 31 (MPLSLGAEMWGPEAWLLLLLLLASFTGRCPA) is a signal peptide. An Ig-like V-type domain is found at 32-144 (GELETSDVVT…GSFQARLRLR (113 aa)). Residues 32 to 349 (GELETSDVVT…GKQVDLVSAS (318 aa)) lie on the Extracellular side of the membrane. Disulfide bonds link C52-C127, C171-C223, and C270-C315. Ig-like C2-type domains are found at residues 148–237 (PPLP…QRIT) and 248–331 (ASVR…VTVD). N281 is a glycosylation site (N-linked (GlcNAc...) asparagine). A helical membrane pass occupies residues 350–370 (VVVVGVIAALLFCLLVVVVVL). Residues 371 to 510 (MSRYHRRKAQ…IYINGRGHLV (140 aa)) are Cytoplasmic-facing. Over residues 399-412 (RRLHSHHTDPRSQP) the composition is skewed to basic and acidic residues. 2 disordered regions span residues 399–447 (RRLH…SYST) and 457–476 (QTELLSPGSGRAEEEEDQDE).

This sequence belongs to the nectin family. Self-associates. Interacts via its Ig-like V-type domain with NECTIN1 Ig-like V-type domain. Interacts via its C-terminus with AFDN. In terms of assembly, (Microbial infection) Interacts (via N-terminus) with measles virus hemagglutinin protein. The soluble form is produced by proteolytic cleavage at the cell surface (shedding), probably by ADAM17/TACE. As to expression, predominantly expressed in placenta. Not detected in normal breast epithelium but expressed in breast carcinoma.

Its subcellular location is the cell membrane. It localises to the cell junction. The protein resides in the adherens junction. It is found in the secreted. In terms of biological role, seems to be involved in cell adhesion through trans-homophilic and -heterophilic interactions, the latter including specifically interactions with NECTIN1. Does not act as receptor for alpha-herpesvirus entry into cells. Its function is as follows. (Microbial infection) Acts as a receptor for measles virus. In Homo sapiens (Human), this protein is Nectin-4.